A 463-amino-acid polypeptide reads, in one-letter code: GTPase Der (463 aa).

2 consecutive EngA-type G domains span residues 2–164 (KKII…PKSK) and 198–369 (IKIG…KNYT). GTP is bound by residues 8–15 (GRPNVGKS), 55–59 (DSGGL), 116–119 (NKVD), 204–211 (GRVNVGKS), 251–255 (DTAGI), and 315–318 (NKWD). Residues 370 to 454 (QKMKTSRLNE…PVILIPKNRS (85 aa)) form the KH-like domain.

This sequence belongs to the TRAFAC class TrmE-Era-EngA-EngB-Septin-like GTPase superfamily. EngA (Der) GTPase family. In terms of assembly, associates with the 50S ribosomal subunit.

GTPase that plays an essential role in the late steps of ribosome biogenesis. This Campylobacter fetus subsp. fetus (strain 82-40) protein is GTPase Der.